The chain runs to 100 residues: Competence protein ComGE (100 aa).

A helical membrane pass occupies residues 15–35; it reads VILLEAVVALAIFASIATLLL.

The transformation pili are flexible filaments, consisting mainly of the major pilin ComGC and smaller amounts of the minor pilins, including at least ComGD, ComGF and ComGG, and perhaps ComGE. Interacts with ComGD. Interacts with ComGF. Interacts with ComGG.

The protein localises to the cell membrane. The protein resides in the cell surface. Its function is as follows. Required for formation of the type IV-like pilus (T4P) that plays a role in transformation. Transformation pili are dynamically extended and retracted, perhaps thereby promoting DNA uptake and transformation. Involved in transformation. Required for DNA binding. This Streptococcus pneumoniae (strain ATCC BAA-255 / R6) protein is Competence protein ComGE.